The sequence spans 622 residues: Low affinity potassium transport system protein Kup (622 aa).

The next 12 helical transmembrane spans lie at 9–29, 49–69, 101–121, 137–157, 163–183, 213–233, 247–267, 276–296, 337–357, 363–383, 395–415, and 419–439; these read LPALTLAAIGVVYGDIGTSPL, VFGFLSLIFWLLIFTVSIKYI, VLVILGLIGGSFFYGEVVITP, PQLDTWIVPISIIVLTLLFVI, GMVGKLFAPIMLIWFLLLAVL, VSFIALGAVVLSITGVEALYA, WFSVVLPSLVLNYFGQGALLL, PFFLLAPEWALIPMLIIATLA, IYIPFINWLLYVSVVIVIVSF, LAAAYGIAVTGTMVLTSILSA, LFVGLMLVAFLCIDIPLFSAN, and IVSGGWLPLSLGMVMFTVMTT.

It belongs to the HAK/KUP transporter (TC 2.A.72) family.

It is found in the cell inner membrane. It carries out the reaction K(+)(in) + H(+)(in) = K(+)(out) + H(+)(out). Responsible for the low-affinity transport of potassium into the cell. Likely operates as a K(+):H(+) symporter. In Klebsiella pneumoniae subsp. pneumoniae (strain ATCC 700721 / MGH 78578), this protein is Low affinity potassium transport system protein Kup.